Here is a 470-residue protein sequence, read N- to C-terminus: L-seryl-tRNA(Sec) selenium transferase (470 aa).

Lysine 292 is modified (N6-(pyridoxal phosphate)lysine).

The protein belongs to the SelA family. Pyridoxal 5'-phosphate serves as cofactor.

The protein localises to the cytoplasm. The catalysed reaction is L-seryl-tRNA(Sec) + selenophosphate + H(+) = L-selenocysteinyl-tRNA(Sec) + phosphate. It participates in aminoacyl-tRNA biosynthesis; selenocysteinyl-tRNA(Sec) biosynthesis; selenocysteinyl-tRNA(Sec) from L-seryl-tRNA(Sec) (bacterial route): step 1/1. Functionally, converts seryl-tRNA(Sec) to selenocysteinyl-tRNA(Sec) required for selenoprotein biosynthesis. This is L-seryl-tRNA(Sec) selenium transferase from Moorella thermoacetica (strain ATCC 39073 / JCM 9320).